A 70-amino-acid chain; its full sequence is Large ribosomal subunit protein bL31 (70 aa).

Zn(2+) is bound by residues C16, C18, C37, and C40.

Belongs to the bacterial ribosomal protein bL31 family. Type A subfamily. As to quaternary structure, part of the 50S ribosomal subunit. Zn(2+) serves as cofactor.

Functionally, binds the 23S rRNA. This Shewanella oneidensis (strain ATCC 700550 / JCM 31522 / CIP 106686 / LMG 19005 / NCIMB 14063 / MR-1) protein is Large ribosomal subunit protein bL31.